Here is a 243-residue protein sequence, read N- to C-terminus: NAD-dependent protein deacylase SIR2rp3 (243 aa).

The Deacetylase sirtuin-type domain occupies 1–239 (MKACRCITIL…PTWVDQVLKE (239 aa)). NAD(+) is bound at residue 12-31 (GAGISAESGISTFRDSNGLW). Residues Tyr-56 and Arg-59 each contribute to the substrate site. Residue 95-98 (QNVD) participates in NAD(+) binding. The active-site Proton acceptor is His-113. Residues Cys-121 and Cys-141 each contribute to the Zn(2+) site. NAD(+) is bound by residues 181–183 (GTS) and Ala-225.

This sequence belongs to the sirtuin family. Class III subfamily. Zn(2+) serves as cofactor.

The protein resides in the mitochondrion. The catalysed reaction is N(6)-malonyl-L-lysyl-[protein] + NAD(+) + H2O = 2''-O-malonyl-ADP-D-ribose + nicotinamide + L-lysyl-[protein]. It catalyses the reaction N(6)-succinyl-L-lysyl-[protein] + NAD(+) + H2O = 2''-O-succinyl-ADP-D-ribose + nicotinamide + L-lysyl-[protein]. It carries out the reaction N(6)-glutaryl-L-lysyl-[protein] + NAD(+) + H2O = 2''-O-glutaryl-ADP-D-ribose + nicotinamide + L-lysyl-[protein]. Its function is as follows. NAD-dependent lysine demalonylase, desuccinylase and deglutarylase that specifically removes malonyl, succinyl and glutaryl groups on target proteins. Has weak NAD-dependent protein deacetylase activity; however this activity may not be physiologically relevant in vivo. This is NAD-dependent protein deacylase SIR2rp3 (SIR2rp3) from Leishmania major.